A 296-amino-acid chain; its full sequence is Homoserine kinase (296 aa).

Residue 84-94 participates in ATP binding; it reads PLARGLGSSSS.

The protein belongs to the GHMP kinase family. Homoserine kinase subfamily.

The protein localises to the cytoplasm. It catalyses the reaction L-homoserine + ATP = O-phospho-L-homoserine + ADP + H(+). The protein operates within amino-acid biosynthesis; L-threonine biosynthesis; L-threonine from L-aspartate: step 4/5. Functionally, catalyzes the ATP-dependent phosphorylation of L-homoserine to L-homoserine phosphate. The protein is Homoserine kinase of Lactococcus lactis subsp. cremoris (strain SK11).